A 652-amino-acid chain; its full sequence is Carboxypeptidase S1 homolog A (652 aa).

Residues 1–19 form the signal peptide; sequence MRFAASIAVALPVIHAASA. C50 and C121 are disulfide-bonded. N-linked (GlcNAc...) asparagine glycans are attached at residues N77, N132, N161, N168, N184, and N202. S238 is a catalytic residue. Residues N260, N299, N347, and N410 are each glycosylated (N-linked (GlcNAc...) asparagine). Intrachain disulfides connect C325–C361 and C332–C354. D458 is an active-site residue. C461 provides a ligand contact to substrate. 3 N-linked (GlcNAc...) asparagine glycosylation sites follow: N474, N492, and N505. The active site involves H516. Substrate is bound at residue E517. The segment at 608–627 is disordered; it reads AASKGNPPPTTTSSPTAAPT. Over residues 618-627 the composition is skewed to low complexity; that stretch reads TTSSPTAAPT. The GPI-anchor amidated glycine moiety is linked to residue G629. Positions 630–652 are cleaved as a propeptide — removed in mature form; the sequence is SAMLKAPVAMLAISALTVLAFFL.

The protein belongs to the peptidase S10 family.

The protein localises to the cell membrane. It catalyses the reaction Preferential release of a C-terminal arginine or lysine residue.. Extracellular serine carboxypeptidase that contributes to pathogenicity. This Trichophyton rubrum (Athlete's foot fungus) protein is Carboxypeptidase S1 homolog A (SCPA).